The chain runs to 1462 residues: Gag-Pro-Pol polyprotein (1462 aa).

Gly-2 is lipidated: N-myristoyl glycine; by host. The tract at residues 93-142 (QIPSRPAPPPPSSSTHDPPDSDPQIPPPYVEPTAPQVLPVMHPHGAPPNH) is disordered. The residue at position 105 (Ser-105) is a Phosphoserine; by host MAPK1. The PPXY motif signature appears at 118–121 (PPPY). Residues 124-127 (PTAP) carry the PTAP/PSAP motif motif. 2 CCHC-type zinc fingers span residues 355–372 (QPCF…DCTQ) and 378–395 (GPCP…DCPR). Residues 476–554 (IEALLDTGAD…NNWAIIGRDA (79 aa)) enclose the Peptidase A2 domain. The active-site Protease; shared with dimeric partner is Asp-481. The Reverse transcriptase domain occupies 614–804 (LEAGHIEPYT…GTIKFLGQII (191 aa)). Mg(2+) contacts are provided by Asp-680, Asp-755, Asp-756, Asp-1040, Glu-1074, Asp-1096, Asp-1157, Asp-1230, and Asp-1287. Positions 1031-1165 (INTAPCLFSD…TDALLITPVL (135 aa)) constitute an RNase H type-1 domain. An Integrase catalytic domain is found at 1219–1388 (RGLLPNHIWQ…QPIPETHSLS (170 aa)). Positions 1393–1443 (HWYYFKLPGLNSRQWKGPQEALQEAAGAALIPVSASSAQWIPWRLLKRAAC) form a DNA-binding region, integrase-type.

Homodimer; the homodimers are part of the immature particles. Interacts with human TSG101 and NEDD4; these interactions are essential for budding and release of viral particles. In terms of assembly, homodimer; further assembles as homohexamers. Requires Mg(2+) as cofactor. Post-translationally, phosphorylation of the matrix protein p19 by MAPK1 seems to play a role in budding. In terms of processing, myristoylated. Myristoylation of the matrix (MA) domain mediates the transport and binding of Gag polyproteins to the host plasma membrane and is required for the assembly of viral particles. Specific enzymatic cleavages by the viral protease yield mature proteins. The polyprotein is cleaved during and after budding, this process is termed maturation. The protease is autoproteolytically processed at its N- and C-termini.

It is found in the virion. It carries out the reaction Endonucleolytic cleavage to 5'-phosphomonoester.. The catalysed reaction is DNA(n) + a 2'-deoxyribonucleoside 5'-triphosphate = DNA(n+1) + diphosphate. In terms of biological role, the matrix domain targets Gag, Gag-Pro and Gag-Pro-Pol polyproteins to the plasma membrane via a multipartite membrane binding signal, that includes its myristoylated N-terminus. Matrix protein. Functionally, forms the spherical core of the virus that encapsulates the genomic RNA-nucleocapsid complex. Its function is as follows. Binds strongly to viral nucleic acids and promote their aggregation. Also destabilizes the nucleic acids duplexes via highly structured zinc-binding motifs. In terms of biological role, the aspartyl protease mediates proteolytic cleavages of Gag and Gag-Pol polyproteins during or shortly after the release of the virion from the plasma membrane. Cleavages take place as an ordered, step-wise cascade to yield mature proteins. This process is called maturation. Displays maximal activity during the budding process just prior to particle release from the cell (Potential). Cleaves the translation initiation factor eIF4G leading to the inhibition of host cap-dependent translation. RT is a multifunctional enzyme that converts the viral RNA genome into dsDNA in the cytoplasm, shortly after virus entry into the cell. This enzyme displays a DNA polymerase activity that can copy either DNA or RNA templates, and a ribonuclease H (RNase H) activity that cleaves the RNA strand of RNA-DNA heteroduplexes in a partially processive 3' to 5'-endonucleasic mode. Conversion of viral genomic RNA into dsDNA requires many steps. A tRNA-Pro binds to the primer-binding site (PBS) situated at the 5'-end of the viral RNA. RT uses the 3' end of the tRNA primer to perform a short round of RNA-dependent minus-strand DNA synthesis. The reading proceeds through the U5 region and ends after the repeated (R) region which is present at both ends of viral RNA. The portion of the RNA-DNA heteroduplex is digested by the RNase H, resulting in a ssDNA product attached to the tRNA primer. This ssDNA/tRNA hybridizes with the identical R region situated at the 3' end of viral RNA. This template exchange, known as minus-strand DNA strong stop transfer, can be either intra- or intermolecular. RT uses the 3' end of this newly synthesized short ssDNA to perform the RNA-dependent minus-strand DNA synthesis of the whole template. RNase H digests the RNA template except for a polypurine tract (PPT) situated at the 5' end of the genome. It is not clear if both polymerase and RNase H activities are simultaneous. RNase H probably can proceed both in a polymerase-dependent (RNA cut into small fragments by the same RT performing DNA synthesis) and a polymerase-independent mode (cleavage of remaining RNA fragments by free RTs). Secondly, RT performs DNA-directed plus-strand DNA synthesis using the PPT that has not been removed by RNase H as primer. PPT and tRNA primers are then removed by RNase H. The 3' and 5' ssDNA PBS regions hybridize to form a circular dsDNA intermediate. Strand displacement synthesis by RT to the PBS and PPT ends produces a blunt ended, linear dsDNA copy of the viral genome that includes long terminal repeats (LTRs) at both ends. Functionally, catalyzes viral DNA integration into the host chromosome, by performing a series of DNA cutting and joining reactions. The sequence is that of Gag-Pro-Pol polyprotein (gag-pro-pol) from Human T-cell leukemia virus 1 (isolate Caribbea HS-35 subtype A) (HTLV-1).